A 1473-amino-acid chain; its full sequence is Collagen alpha-1(XVII) chain (1473 aa).

Positions 1–19 are enriched in basic and acidic residues; that stretch reads MDITQKNKRDGTEVTERII. 2 disordered regions span residues 1 to 155 and 168 to 188; these read MDIT…PSTR and GSRS…PIPK. At 1-474 the chain is on the cytoplasmic side; that stretch reads MDITQKNKRD…CGSWCSWWKW (474 aa). Positions 1 to 572 are nonhelical region (NC16); sequence MDITQKNKRD…MTEQENGNLR (572 aa). Polar residues-rich tracts occupy residues 57 to 96, 111 to 120, and 170 to 184; these read LTHG…SPGS, EGSSSGNSSP, and RSAS…SNTL. A necessary for interaction with DST and for the recruitment of DST to hemidesmosome region spans residues 146 to 231; it reads RLQSASPSTR…WSSTLPAGSS (86 aa). A helical; Signal-anchor for type II membrane protein transmembrane segment spans residues 475–495; it reads LLGLLLTWLLLLGLLFGLIAL. Residues 496-1473 lie on the Extracellular side of the membrane; that stretch reads AEEVRKLKAR…RRRRSIAVKP (978 aa). 3 disordered regions span residues 567-1017, 1173-1234, and 1261-1308; these read ENGN…LSSS, FRGI…ISGA, and SFIV…SSMG. The segment at 573–1459 is triple-helical region; that stretch reads GSPGPKGDMG…KGEKGDKGDQ (887 aa). Composition is skewed to low complexity over residues 619–638, 667–678, 729–742, and 769–790; these read EPGM…MGPR, PGSVGPKGSIGP, EPGA…AGPD, and PGKP…PGRP. The span at 814-835 shows a compositional bias: pro residues; sequence PGPPGPPGAMGPPGPPGAPGPV. Low complexity-rich tracts occupy residues 837–847 and 854–866; these read PAGLPGQQGPR and GESF…SFSE. 2 stretches are compositionally biased toward pro residues: residues 878–899 and 913–922; these read PPGP…PGPP and PPGPPGPPGP. The span at 940 to 957 shows a compositional bias: low complexity; that stretch reads FPGLSGSGSSSLGLNLQG. 2 stretches are compositionally biased toward pro residues: residues 1001–1011 and 1179–1188; these read PPGPPGPPGPP and PPGPPGPPGL. The segment covering 1198–1210 has biased composition (polar residues); it reads TEDLSSYLQTAGL. 2 stretches are compositionally biased toward pro residues: residues 1214–1228 and 1266–1275; these read PGPP…PRGP and PPGPPGPQGP. Residues 1283–1307 are compositionally biased toward low complexity; it reads STDSSYSRSGSSSSFSRDTSYSSSM. N-linked (GlcNAc...) asparagine glycosylation is present at N1404. The interval 1417–1473 is disordered; sequence GAIPGPPGQKGEMGIPGPKGERGPAGPPGPRGHKGEKGDKGDQFYIGRRRRSIAVKP. Basic and acidic residues predominate over residues 1449 to 1458; that stretch reads HKGEKGDKGD. The tract at residues 1460–1473 is nonhelical region (NC1); the sequence is FYIGRRRRSIAVKP. Basic residues predominate over residues 1463–1473; that stretch reads GRRRRSIAVKP.

In terms of assembly, homotrimers of alpha 1(XVII)chains. Interacts (via cytoplasmic region) with ITGB4 (via cytoplasmic region). Interacts (via cytoplasmic region) with DST (via N-terminus). Interacts (via N-terminus) with PLEC. Interacts (via cytoplasmic region) with DSP. The intracellular/endo domain is disulfide-linked. In terms of processing, prolines at the third position of the tripeptide repeating unit (G-X-Y) are hydroxylated in some or all of the chains. Post-translationally, the ectodomain is shedded from the surface of keratinocytes resulting in a 120-kDa soluble form, also named as 120 kDa linear IgA disease antigen homolog. The shedding is mediated by membrane-bound metalloproteases.

It is found in the cell junction. It localises to the hemidesmosome. The protein resides in the membrane. The protein localises to the secreted. Its subcellular location is the extracellular space. It is found in the extracellular matrix. It localises to the basement membrane. Functionally, may play a role in the integrity of hemidesmosome and the attachment of basal keratinocytes to the underlying basement membrane. In terms of biological role, the 120 kDa linear IgA disease antigen homolog is an anchoring filament component involved in dermal-epidermal cohesion. The polypeptide is Collagen alpha-1(XVII) chain (COL17A1) (Bos taurus (Bovine)).